A 201-amino-acid polypeptide reads, in one-letter code: Small ribosomal subunit protein uS4c (201 aa).

The segment at 17-44 (ALPGLTNKKPRTGSDLRNQSRSGKKSQY) is disordered. The S4 RNA-binding domain maps to 89–149 (MRLDNILFRL…DEQKSRALIQ (61 aa)).

Belongs to the universal ribosomal protein uS4 family. In terms of assembly, part of the 30S ribosomal subunit. Contacts protein S5. The interaction surface between S4 and S5 is involved in control of translational fidelity.

It is found in the plastid. It localises to the chloroplast. In terms of biological role, one of the primary rRNA binding proteins, it binds directly to 16S rRNA where it nucleates assembly of the body of the 30S subunit. With S5 and S12 plays an important role in translational accuracy. This chain is Small ribosomal subunit protein uS4c (rps4), found in Atropa belladonna (Belladonna).